The chain runs to 224 residues: N-(5'-phosphoribosyl)anthranilate isomerase (224 aa).

This sequence belongs to the TrpF family.

The catalysed reaction is N-(5-phospho-beta-D-ribosyl)anthranilate = 1-(2-carboxyphenylamino)-1-deoxy-D-ribulose 5-phosphate. It functions in the pathway amino-acid biosynthesis; L-tryptophan biosynthesis; L-tryptophan from chorismate: step 3/5. This Saccharomyces cerevisiae (strain ATCC 204508 / S288c) (Baker's yeast) protein is N-(5'-phosphoribosyl)anthranilate isomerase (TRP1).